Here is a 105-residue protein sequence, read N- to C-terminus: 5,5'-dehydrodivanillate O-demethylase ferredoxin subunit (105 aa).

One can recognise a 2Fe-2S ferredoxin-type domain in the interval 2–105 (AQLKVVTRDG…GMTVTIAPED (104 aa)). The [2Fe-2S] cluster site is built by Cys-40, Cys-46, Cys-49, and Cys-86.

The protein belongs to the adrenodoxin/putidaredoxin family. As to quaternary structure, monomer. The three-component monooxygenase is composed of an oxygenase (LigXa), a ferredoxin (LigXc) and a ferredoxin reductase (LigXd). [2Fe-2S] cluster is required as a cofactor.

It carries out the reaction 5,5'-dehydrodivanillate + NADH + O2 + H(+) = 2,2',3-trihydroxy-3'-methoxy-5,5'-dicarboxybiphenyl + formaldehyde + NAD(+) + H2O. In terms of biological role, involved in the catabolism of 5,5'-dehydrodivanillate (DDVA), an intermediate in the biodegradation of lignin. Part of a three-component monooxygenase that catalyzes the O-demethylation of DDVA, leading to the formation of 2,2',3-trihydroxy-3'-methoxy-5,5'-dicarboxybiphenyl (OH-DDVA). LigXc probably functions as an intermediate electron transfer protein between LigXd and LigXa. The polypeptide is 5,5'-dehydrodivanillate O-demethylase ferredoxin subunit (Sphingobium sp. (strain NBRC 103272 / SYK-6)).